The following is a 932-amino-acid chain: RNA-binding protein 12 (932 aa).

The tract at residues 97-116 (IPPANASRSGPPPSSGMSGR) is disordered. Low complexity predominate over residues 98–116 (PPANASRSGPPPSSGMSGR). The 76-residue stretch at 304–379 (LYVSVHGMPF…RYVEVSPATE (76 aa)) folds into the RRM 1 domain. Serine 352 and serine 375 each carry phosphoserine. The disordered stretch occupies residues 393–424 (QNMGPSGQSHPPPQTLPRSKSPSGQKRSRSRS). Residues 408 to 417 (LPRSKSPSGQ) show a composition bias toward polar residues. 3 positions are modified to phosphoserine: serine 420, serine 422, and serine 424. Positions 430 to 507 (FCVYLKGLPF…RFIQVHPITK (78 aa)) constitute an RRM 2 domain. A Phosphoserine modification is found at serine 525. The span at 717–734 (NGPPFNFPGNFGGSNAFG) shows a compositional bias: low complexity. Positions 717 to 853 (NGPPFNFPGN…PGFASSSGKP (137 aa)) are disordered. Over residues 783-811 (SGFGGGPQNFGNGPGSLGGPPGFGSGPPG) the composition is skewed to gly residues. Over residues 824–836 (AFGPGPGPGPGPG) the composition is skewed to pro residues. One can recognise an RRM 3 domain in the interval 856 to 932 (TVIKVQNMPF…GSRKVKLVLG (77 aa)).

The protein localises to the nucleus. The protein is RNA-binding protein 12 (RBM12) of Macaca mulatta (Rhesus macaque).